We begin with the raw amino-acid sequence, 332 residues long: Methionyl-tRNA formyltransferase (332 aa).

124–127 (SLLP) serves as a coordination point for (6S)-5,6,7,8-tetrahydrofolate.

Belongs to the Fmt family.

The enzyme catalyses L-methionyl-tRNA(fMet) + (6R)-10-formyltetrahydrofolate = N-formyl-L-methionyl-tRNA(fMet) + (6S)-5,6,7,8-tetrahydrofolate + H(+). Functionally, attaches a formyl group to the free amino group of methionyl-tRNA(fMet). The formyl group appears to play a dual role in the initiator identity of N-formylmethionyl-tRNA by promoting its recognition by IF2 and preventing the misappropriation of this tRNA by the elongation apparatus. This is Methionyl-tRNA formyltransferase from Polynucleobacter asymbioticus (strain DSM 18221 / CIP 109841 / QLW-P1DMWA-1) (Polynucleobacter necessarius subsp. asymbioticus).